A 177-amino-acid chain; its full sequence is ATP-dependent protease subunit HslV (177 aa).

Thr-2 is an active-site residue. Gly-157, Cys-160, and Thr-163 together coordinate Na(+).

This sequence belongs to the peptidase T1B family. HslV subfamily. A double ring-shaped homohexamer of HslV is capped on each side by a ring-shaped HslU homohexamer. The assembly of the HslU/HslV complex is dependent on binding of ATP.

It localises to the cytoplasm. The catalysed reaction is ATP-dependent cleavage of peptide bonds with broad specificity.. Allosterically activated by HslU binding. Protease subunit of a proteasome-like degradation complex believed to be a general protein degrading machinery. The sequence is that of ATP-dependent protease subunit HslV from Aeromonas salmonicida (strain A449).